A 115-amino-acid chain; its full sequence is Large ribosomal subunit protein P2y (115 aa).

The interval 63 to 115 (ASVPSGGGGGVAVASATSGGGGGGGASAAESKKEEKKEEKEESDDDMGFSLFE) is disordered. Residues 92–102 (ESKKEEKKEEK) are compositionally biased toward basic and acidic residues. Residue serine 105 is modified to Phosphoserine.

The protein belongs to the eukaryotic ribosomal protein P1/P2 family. In terms of assembly, P1 and P2 exist as dimers at the large ribosomal subunit. Post-translationally, phosphorylated.

Its function is as follows. Plays an important role in the elongation step of protein synthesis. The polypeptide is Large ribosomal subunit protein P2y (RPP2B) (Arabidopsis thaliana (Mouse-ear cress)).